Consider the following 698-residue polypeptide: Dual trans-enoyl reductase/FAD-dependent monooxygenase tazHJ (698 aa).

Residues 54–57 (STAT), 78–81 (SPRH), Y96, and 279–280 (IA) contribute to the NADP(+) site. The FAD site is built by E299, G312, and R372. Residue R455 is part of the active site. Positions 571 and 584 each coordinate FAD.

The protein in the N-terminal section; belongs to the zinc-containing alcohol dehydrogenase family. In the C-terminal section; belongs to the paxM FAD-dependent monooxygenase family.

Its pathway is secondary metabolite biosynthesis. In terms of biological role, dual trans-enoyl reductase/FAD-dependent monooxygenase; part of the gene cluster that mediates the biosynthesis of azaterrilone A and other azaphilones, a class of fungal metabolites characterized by a highly oxygenated pyrano-quinone bicyclic core and exhibiting a broad range of bioactivities. The first step of the pathway begins with the non-reducing polyketide synthase tazA that assembles one acetyl-CoA starter unit, five malonyl-CoA units, and catalyzes a series of Claisen condensations, methylation, PT-mediated cyclization, and finally releases the first hexaketide precursor through the R-domain. The tazA product then undergoes reduction on its terminal ketone and the following pyran-ring formation by yet undetermined enzyme(s). Dehydration and enoyl reduction, possibly involving the trans-enoyl reductase tazE leads to the next intermediate. TazD is predicted as an acetyltransferase and might catalyze the acetylation steps leading to the synthesis of azaterrilone A. Azaterrilone A is not the final product of the taz pathway and both the highly reducing polyketide synthase tazB and the dual enzyme tazHJ catalyze late steps of the pathway, leading to the production of the 2 final stereoisomers that contain additional polyketide modification whose structures have still to be determined. The chain is Dual trans-enoyl reductase/FAD-dependent monooxygenase tazHJ from Aspergillus terreus (strain NIH 2624 / FGSC A1156).